The following is a 449-amino-acid chain: Ribosomal protein uS12 methylthiotransferase RimO (449 aa).

Positions 16-126 (PKISFVSLGC…VMEAVHAAIA (111 aa)) constitute an MTTase N-terminal domain. [4Fe-4S] cluster-binding residues include Cys25, Cys61, Cys90, Cys157, Cys161, and Cys164. In terms of domain architecture, Radical SAM core spans 143–381 (LTPRHYAYLK…MEHQQKISAR (239 aa)). In terms of domain architecture, TRAM spans 384 to 449 (REKIGKHVSV…DAYDLHGKAV (66 aa)).

This sequence belongs to the methylthiotransferase family. RimO subfamily. Requires [4Fe-4S] cluster as cofactor.

The protein resides in the cytoplasm. The catalysed reaction is L-aspartate(89)-[ribosomal protein uS12]-hydrogen + (sulfur carrier)-SH + AH2 + 2 S-adenosyl-L-methionine = 3-methylsulfanyl-L-aspartate(89)-[ribosomal protein uS12]-hydrogen + (sulfur carrier)-H + 5'-deoxyadenosine + L-methionine + A + S-adenosyl-L-homocysteine + 2 H(+). Functionally, catalyzes the methylthiolation of an aspartic acid residue of ribosomal protein uS12. The protein is Ribosomal protein uS12 methylthiotransferase RimO of Beijerinckia indica subsp. indica (strain ATCC 9039 / DSM 1715 / NCIMB 8712).